The following is a 104-amino-acid chain: Type IV secretion system protein PtlB homolog (104 aa).

A helical membrane pass occupies residues 30–50; it reads IALLGIWFSIAFLALFPVALL.

This sequence belongs to the virB3 family.

It localises to the cell membrane. The chain is Type IV secretion system protein PtlB homolog (ptlB) from Bordetella parapertussis (strain 12822 / ATCC BAA-587 / NCTC 13253).